The chain runs to 361 residues: Chorismate synthase (361 aa).

Residues R48 and R54 each coordinate NADP(+). FMN contacts are provided by residues 125–127 (RSS), 238–239 (NA), G278, 293–297 (KPTSS), and R319.

Belongs to the chorismate synthase family. In terms of assembly, homotetramer. Requires FMNH2 as cofactor.

The catalysed reaction is 5-O-(1-carboxyvinyl)-3-phosphoshikimate = chorismate + phosphate. It functions in the pathway metabolic intermediate biosynthesis; chorismate biosynthesis; chorismate from D-erythrose 4-phosphate and phosphoenolpyruvate: step 7/7. Its function is as follows. Catalyzes the anti-1,4-elimination of the C-3 phosphate and the C-6 proR hydrogen from 5-enolpyruvylshikimate-3-phosphate (EPSP) to yield chorismate, which is the branch point compound that serves as the starting substrate for the three terminal pathways of aromatic amino acid biosynthesis. This reaction introduces a second double bond into the aromatic ring system. In Escherichia coli O1:K1 / APEC, this protein is Chorismate synthase.